A 297-amino-acid polypeptide reads, in one-letter code: Guanylate kinase (297 aa).

A Guanylate kinase-like domain is found at 4–183; it reads GKMIIISGPS…AVAKITDVLH (180 aa). 11–18 contacts ATP; sequence GPSGVGKG. The interval 204–297 is unknown; sequence EQIVKEKYMY…EQKHYNNDEF (94 aa).

The protein belongs to the guanylate kinase family.

The protein resides in the cytoplasm. The enzyme catalyses GMP + ATP = GDP + ADP. In terms of biological role, essential for recycling GMP and indirectly, cGMP. The chain is Guanylate kinase (gmk) from Mycoplasma mycoides subsp. mycoides SC (strain CCUG 32753 / NCTC 10114 / PG1).